Here is a 209-residue protein sequence, read N- to C-terminus: Protein TIFY 11c (209 aa).

In terms of domain architecture, Tify spans 93-128 (EITEKAQLTIFYGGSVVVFDDFPAEKAGELMKLAGS). A Jas motif is present at residues 153–177 (PIARKVSLQRFLEKRKNRIVVAEPL). The short motif at 155-162 (ARKVSLQR) is the Nuclear localization signal element. A disordered region spans residues 175-209 (EPLPESEKKEAESSKRAKKDDGGASWLQVNPTLSL). Residues 179–196 (ESEKKEAESSKRAKKDDG) show a composition bias toward basic and acidic residues.

This sequence belongs to the TIFY/JAZ family. Ubiquitinated. Targeted for degradation by the SCF(COI1) E3 ubiquitin ligase-proteasome pathway during jasmonate signaling.

Its subcellular location is the nucleus. Its function is as follows. Repressor of jasmonate responses. This is Protein TIFY 11c from Oryza sativa subsp. indica (Rice).